The sequence spans 279 residues: Putative pyruvate, phosphate dikinase regulatory protein (279 aa).

Gly153–Thr160 lines the ADP pocket.

It belongs to the pyruvate, phosphate/water dikinase regulatory protein family. PDRP subfamily.

It carries out the reaction N(tele)-phospho-L-histidyl/L-threonyl-[pyruvate, phosphate dikinase] + ADP = N(tele)-phospho-L-histidyl/O-phospho-L-threonyl-[pyruvate, phosphate dikinase] + AMP + H(+). It catalyses the reaction N(tele)-phospho-L-histidyl/O-phospho-L-threonyl-[pyruvate, phosphate dikinase] + phosphate + H(+) = N(tele)-phospho-L-histidyl/L-threonyl-[pyruvate, phosphate dikinase] + diphosphate. Its function is as follows. Bifunctional serine/threonine kinase and phosphorylase involved in the regulation of the pyruvate, phosphate dikinase (PPDK) by catalyzing its phosphorylation/dephosphorylation. The polypeptide is Putative pyruvate, phosphate dikinase regulatory protein (Brucella melitensis biotype 2 (strain ATCC 23457)).